Here is a 160-residue protein sequence, read N- to C-terminus: uncharacterized protein (160 aa).

This is an uncharacterized protein from Mycobacterium tuberculosis (strain CDC 1551 / Oshkosh).